The following is a 41-amino-acid chain: uncharacterized protein (41 aa).

Positions 19–41 (NSTRNSSSSSRSSYSSRTTVFSL) are disordered.

This is an uncharacterized protein from Dictyostelium discoideum (Social amoeba).